The sequence spans 259 residues: Putative protein-tyrosine sulfotransferase (259 aa).

Cysteines 13 and 68 form a disulfide. Glu-16 (proton donor/acceptor) is an active-site residue. Residue Asn-36 is glycosylated (N-linked (GlcNAc...) asparagine). Positions 95, 103, and 107 each coordinate 3'-phosphoadenylyl sulfate. Residue Asn-115 is glycosylated (N-linked (GlcNAc...) asparagine). Cys-137 and Cys-144 are disulfide-bonded. 3'-phosphoadenylyl sulfate-binding positions include Tyr-149 and 194-203; that span reads SASQVKNSIN.

This sequence belongs to the protein sulfotransferase family.

It carries out the reaction L-tyrosyl-[protein] + 3'-phosphoadenylyl sulfate = O-sulfo-L-tyrosine-[protein] + adenosine 3',5'-bisphosphate + H(+). Catalyzes the O-sulfation of tyrosine residues within acidic motifs of polypeptides, using 3'-phosphoadenylyl sulfate (PAPS) as cosubstrate. The polypeptide is Putative protein-tyrosine sulfotransferase (tpst-2) (Caenorhabditis elegans).